The following is a 198-amino-acid chain: Transcription factor BHLH133 (198 aa).

The tract at residues 114 to 127 is basic motif; degenerate; that stretch reads SAESSQSYYAKNRR. The bHLH domain occupies 114–163; it reads SAESSQSYYAKNRRQRINERLRILQELIPNGTKVDISTMLEEAIQYVKFL. Positions 128–163 are helix-loop-helix motif; sequence QRINERLRILQELIPNGTKVDISTMLEEAIQYVKFL.

Belongs to the bHLH protein family.

It localises to the nucleus. Functionally, transcription factor that acts as a regulator of iron homeostasis. May act as negative regulator of iron transportation from root to shoot. Does not seem to be involved in the suppression of the induction of iron deficiency responsive genes. The sequence is that of Transcription factor BHLH133 from Oryza sativa subsp. japonica (Rice).